The primary structure comprises 191 residues: Thymidylate kinase (191 aa).

ATP is bound at residue 7–14 (GVDGAGKS).

Belongs to the thymidylate kinase family.

It carries out the reaction dTMP + ATP = dTDP + ADP. In terms of biological role, phosphorylation of dTMP to form dTDP in both de novo and salvage pathways of dTTP synthesis. The polypeptide is Thymidylate kinase (tmk) (Helicobacter pylori (strain ATCC 700392 / 26695) (Campylobacter pylori)).